The chain runs to 860 residues: Late endosome and vacuole interface protein 11 (860 aa).

The tract at residues 19 to 45 is disordered; sequence EIINNSDHSSSHSTSHEEEDEEEDDTE. Over residues 20 to 31 the composition is skewed to low complexity; that stretch reads IINNSDHSSSHS. The span at 35–45 shows a compositional bias: acidic residues; that stretch reads EEEDEEEDDTE. A BED-type zinc finger spans residues 84–138; sequence KNIAKFWSHFLAIEKKLTKVKCKHCGEILTRSDASLTKTFRSHLKTKHNISANKN. The Zn(2+) site is built by cysteine 105, cysteine 108, histidine 126, and histidine 131.

Belongs to the VID22 family.

The protein resides in the nucleus. Its function is as follows. Involved in vacuolar processing and morphology. The polypeptide is Late endosome and vacuole interface protein 11 (ENV11) (Saccharomyces cerevisiae (strain ATCC 204508 / S288c) (Baker's yeast)).